A 230-amino-acid polypeptide reads, in one-letter code: Ribonuclease 3 (230 aa).

The region spanning 5–125 (YSRFYNILGY…VIGAIYLDSD (121 aa)) is the RNase III domain. E40 contributes to the Mg(2+) binding site. The active site involves D44. Mg(2+) is bound by residues D111 and E114. Residue E114 is part of the active site. A DRBM domain is found at 153–223 (DSKSKLQEIL…AEKMIEMLSQ (71 aa)).

Belongs to the ribonuclease III family. As to quaternary structure, homodimer. Mg(2+) is required as a cofactor.

It is found in the cytoplasm. The catalysed reaction is Endonucleolytic cleavage to 5'-phosphomonoester.. In terms of biological role, digests double-stranded RNA. Involved in the processing of primary rRNA transcript to yield the immediate precursors to the large and small rRNAs (23S and 16S). Processes some mRNAs, and tRNAs when they are encoded in the rRNA operon. Processes pre-crRNA and tracrRNA of type II CRISPR loci if present in the organism. The chain is Ribonuclease 3 from Francisella tularensis subsp. holarctica (strain OSU18).